Consider the following 237-residue polypeptide: Type II secretion system protein J (237 aa).

The propeptide at 1–6 (MRLQRG) is leader sequence. Phenylalanine 7 bears the N-methylphenylalanine mark. A helical transmembrane segment spans residues 7-29 (FTLLELLIAIAIFALLALATYRM). The disordered stretch occupies residues 203–237 (PLKQDQPQGQPGGENGENGEGGVPQPPEGMPGAPE). Residues 212-224 (QPGGENGENGEGG) show a composition bias toward gly residues. Residues 226–237 (PQPPEGMPGAPE) are compositionally biased toward pro residues.

The protein belongs to the GSP J family. Type II secretion is composed of four main components: the outer membrane complex, the inner membrane complex, the cytoplasmic secretion ATPase and the periplasm-spanning pseudopilus. Forms the tip of the type II pseudopilus by interacting with XcpV, XcpU and XcpX. Interacts with core component XcpT. In terms of processing, cleaved by prepilin peptidase. Post-translationally, methylated by prepilin peptidase at the amino group of the N-terminal phenylalanine once the leader sequence is cleaved by prepilin peptidase.

The protein resides in the cell inner membrane. Component of the type II secretion system required for the energy-dependent secretion of extracellular factors such as proteases and toxins from the periplasm. Part of the pseudopilus tip complex that is critical for the recognition and binding of secretion substrates. Type II pseudopilus confers increased bacterial adhesive capabilities. The protein is Type II secretion system protein J (xcpW) of Pseudomonas aeruginosa (strain ATCC 15692 / DSM 22644 / CIP 104116 / JCM 14847 / LMG 12228 / 1C / PRS 101 / PAO1).